The primary structure comprises 116 residues: Peptidyl-tRNA hydrolase (116 aa).

It belongs to the PTH2 family.

Its subcellular location is the cytoplasm. The enzyme catalyses an N-acyl-L-alpha-aminoacyl-tRNA + H2O = an N-acyl-L-amino acid + a tRNA + H(+). Its function is as follows. The natural substrate for this enzyme may be peptidyl-tRNAs which drop off the ribosome during protein synthesis. The sequence is that of Peptidyl-tRNA hydrolase from Methanococcus maripaludis (strain C7 / ATCC BAA-1331).